The following is a 162-amino-acid chain: Sorting nexin-3 (162 aa).

The residue at position 2 (A2) is an N-acetylalanine. The region spanning 27-151 (NFLEIDVSNP…HMFLQDEIID (125 aa)) is the PX domain. The residue at position 43 (R43) is an Omega-N-methylarginine. 4 residues coordinate a 1,2-diacyl-sn-glycero-3-phospho-(1D-myo-inositol-3-phosphate): R70, S72, K95, and R118. Position 72 is a phosphoserine (S72). Residue K95 forms a Glycyl lysine isopeptide (Lys-Gly) (interchain with G-Cter in SUMO2) linkage. The binds predominantly to PtdIns(P5) and weaker to PtdIns(P3) abd PtdIns(P4); involved in neurite outgrowth regulation stretch occupies residues 147–162 (DEIIDKSYTPSKIRHA).

This sequence belongs to the sorting nexin family. Interacts with VPS26A, VPS29. Interacts with VPS35; the interaction with VPS35 is direct. The association with the retromer CSC subcomplex subunits is proposed to represent a functional distinct retromer variant described as SNX3-retromer complex. Interacts with USP10 and SCNN1A. Interacts with TRFC. Interacts with SNX8; 2 molecules of SNX8 seems to associate with one molecule of SNX3. Interacts with PTPRU. Interacts with MON2 and DOP1B. In terms of processing, ubiquitinated, leading to its proteasomal degradation. Deubiquitinated by USP10. In terms of tissue distribution, highly expressed in developing red cells and hematopoietic tissues.

The protein resides in the early endosome. It is found in the cytoplasmic vesicle. Its subcellular location is the phagosome. Its function is as follows. Phosphoinositide-binding protein required for multivesicular body formation. Specifically binds phosphatidylinositol 3-phosphate (PtdIns(P3)). Can also bind phosphatidylinositol 4-phosphate (PtdIns(P4)), phosphatidylinositol 5-phosphate (PtdIns(P5)) and phosphatidylinositol 3,5-biphosphate (PtdIns(3,5)P2). Plays a role in protein transport between cellular compartments. Together with RAB7A facilitates endosome membrane association of the retromer cargo-selective subcomplex (CSC). May act in part as component of the SNX3-retromer complex which mediates the retrograde endosome-to-TGN transport of WLS distinct from the SNX-BAR retromer pathway. Promotes stability and cell surface expression of epithelial sodium channel (ENAC) subunits SCNN1A and SCNN1G. Not involved in EGFR degradation. Involved in the regulation of phagocytosis in dendritic cells possibly by regulating EEA1 recruitment to the nascent phagosomes. Involved in iron homeostasis through regulation of endocytic recycling of the transferrin receptor Tfrc presuambly by delivering the transferrin:transferrin receptor complex to recycling endosomes; the function may involve the CSC retromer subcomplex. Involved in regulation of neurite outgrowth in primary neurons. This is Sorting nexin-3 (Snx3) from Mus musculus (Mouse).